The chain runs to 276 residues: Phosducin-like protein 1 (276 aa).

A phosphoserine mark is found at S18, S19, S20, and S42. The interval 18-74 (SSSEGEDNGDEGGDNKGASGKSRCSGLTIDTNPDATPAGGFRQQSSTNTGPKGVVKD) is disordered. Residues 62–272 (SSTNTGPKGV…LIEHGIIVDR (211 aa)) enclose the Phosducin domain. Residues 153-276 (FGQVQQLTSH…GIIVDRALYN (124 aa)) are thioredoxin fold.

The protein belongs to the phosducin family. Forms a complex with the beta and gamma subunits of the GTP-binding proteins. Interacts with the CCT chaperonin complex.

Functions as a co-chaperone for CCT in the assembly of heterotrimeric G protein complexes, facilitates the assembly of both Gbeta-Ggamma and RGS-Gbeta5 heterodimers. This chain is Phosducin-like protein 1, found in Drosophila melanogaster (Fruit fly).